Reading from the N-terminus, the 404-residue chain is uncharacterized protein (404 aa).

11 helical membrane passes run 9–29, 36–56, 76–96, 103–123, 135–155, 162–182, 199–219, 236–256, 288–308, 319–339, and 366–386; these read IYLIGELSAKCVPFLLLPYLS, GFGELSYYQTFLPLFVIFIGL, LVVKTGYAYTLSIGGLGLLFC, IMFYLVLSAIFQVFLSVQLSI, FIQVSSTITNAALTILMLEFY, KRILAILISNVFVALLSYLIY, AFFYIMSFGFLMIFHHGSFFI, LGLYAMGAQIAFILSVFILAI, IVPIPSLVTLIVPEQWLLFFL, IIVFLLSTSLTIPYLFLVNYL, and LIFTDVVYIPYASVLGALGIL.

The protein belongs to the polysaccharide synthase family. HI_0867/HI_1700 subfamily.

The protein resides in the cell membrane. This is an uncharacterized protein from Haemophilus influenzae (strain ATCC 51907 / DSM 11121 / KW20 / Rd).